A 210-amino-acid polypeptide reads, in one-letter code: MTDDKKKGKFIVFEGLDRSGKSTQSKLLVEYLKNNNVEVKHLYFPNRETGIGQIISKYLKMENSMSNETIHLLFSANRWEHMNEIKSLLLKGIWVVCDRYAYSGVAYSSGALNLNKTWCMNPDQGLIKPDVVFYLNVPPNYAQNRSDYGEEIYEKVETQKKIYETYKHFAHEDYWINIDATRKIEDIHNDIVKEVTKIKVEPEEFNFLWS.

Residue Asp17 coordinates dGMP. DTMP is bound at residue Asp17. ATP-binding residues include Arg18, Ser19, Gly20, Lys21, Ser22, and Thr23. 5 residues coordinate dTMP: Arg47, Phe74, Arg78, Arg99, and Tyr107. DGMP contacts are provided by Phe74, Arg78, Arg99, Tyr107, Ser108, and Tyr153. Residues Gln143 to Lys155 form an LID region. Arg182 provides a ligand contact to ATP.

Belongs to the thymidylate kinase family. In terms of assembly, homodimer. Binds two dTMP molecules per dimer. Binds only one dTGP molecule per dimer.

The enzyme catalyses dTMP + ATP = dTDP + ADP. The catalysed reaction is dGMP + ATP = dGDP + ADP. Its pathway is pyrimidine metabolism; dTTP biosynthesis. With respect to regulation, inhibited by deoxyguanosine (dG), deoxythymidine (dT) and azidothymidine (AZT). Its function is as follows. Catalyzes the phosphorylation of thymidine monophosphate (dTMP) to thymidine diphosphate (dTDP), the immediate precursor for the DNA building block dTTP. Can also phosphorylate dGMP and to a lesser extent GMP, dUMP and dIMP. Can use either ATP or dATP as phosphate donors in presence of Mg(2+). The sequence is that of Thymidylate kinase from Plasmodium falciparum (isolate 3D7).